The chain runs to 238 residues: 7-carboxy-7-deazaguanine synthase (238 aa).

Substrate-binding positions include 14–16 (IQG) and Arg29. One can recognise a Radical SAM core domain in the interval 20–234 (VVGQKTMFIR…PQLHALVWGN (215 aa)). Residues Cys33, Cys37, and Cys40 each contribute to the [4Fe-4S] cluster site. Ser42 contributes to the Mg(2+) binding site. Residue Ser80 participates in substrate binding. Residues Gly82 and 126-128 (SPK) each bind S-adenosyl-L-methionine.

It belongs to the radical SAM superfamily. 7-carboxy-7-deazaguanine synthase family. In terms of assembly, homodimer. The cofactor is [4Fe-4S] cluster. Requires S-adenosyl-L-methionine as cofactor. Mg(2+) is required as a cofactor.

It carries out the reaction 6-carboxy-5,6,7,8-tetrahydropterin + H(+) = 7-carboxy-7-deazaguanine + NH4(+). It functions in the pathway purine metabolism; 7-cyano-7-deazaguanine biosynthesis. Its function is as follows. Catalyzes the complex heterocyclic radical-mediated conversion of 6-carboxy-5,6,7,8-tetrahydropterin (CPH4) to 7-carboxy-7-deazaguanine (CDG), a step common to the biosynthetic pathways of all 7-deazapurine-containing compounds. The protein is 7-carboxy-7-deazaguanine synthase of Bacillus cereus (strain ATCC 14579 / DSM 31 / CCUG 7414 / JCM 2152 / NBRC 15305 / NCIMB 9373 / NCTC 2599 / NRRL B-3711).